Consider the following 712-residue polypeptide: Patatin-like phospholipase domain-containing protein NFIA_019760 (712 aa).

The span at 1–13 shows a compositional bias: basic and acidic residues; the sequence is MTSDEKSATRDIY. Positions 1–21 are disordered; the sequence is MTSDEKSATRDIYDPNTLPDY. A helical membrane pass occupies residues 85 to 105; sequence WPFLFTVFAWITVLGFAYTLT. The 192-residue stretch at 275–466 folds into the PNPLA domain; the sequence is LCLSGGATFA…RTDIPIKALN (192 aa). Residues 306-310 carry the GXSXG motif; the sequence is GTSGG. The active-site Nucleophile is the Ser308. Asp453 functions as the Proton acceptor in the catalytic mechanism. The segment at 628–687 is disordered; that stretch reads RRRQDRAEEHADRMVERLDQSFPERQSDYKDESHYTEVSDSLSATSSRPHTPDARRSSMF. Composition is skewed to basic and acidic residues over residues 632–646 and 652–664; these read DRAE…ERLD and RQSD…HYTE. Over residues 665 to 676 the composition is skewed to polar residues; that stretch reads VSDSLSATSSRP. Basic and acidic residues predominate over residues 677 to 687; the sequence is HTPDARRSSMF.

This sequence belongs to the PLPL family.

The protein resides in the membrane. Probable lipid hydrolase. This is Patatin-like phospholipase domain-containing protein NFIA_019760 from Neosartorya fischeri (strain ATCC 1020 / DSM 3700 / CBS 544.65 / FGSC A1164 / JCM 1740 / NRRL 181 / WB 181) (Aspergillus fischerianus).